We begin with the raw amino-acid sequence, 421 residues long: ATP-dependent RNA helicase RhlB (421 aa).

The short motif at 9–37 is the Q motif element; sequence QKFSDFALHPKVVEALEKKGFHNCTPIQA. The region spanning 40 to 219 is the Helicase ATP-binding domain; the sequence is LPLTLAGRDV…FEQMNNAEYI (180 aa). 53–60 is a binding site for ATP; that stretch reads AQTGTGKT. A DEAD box motif is present at residues 165–168; the sequence is DEAD. Positions 245-390 constitute a Helicase C-terminal domain; it reads RLLQTLIEEE…VSKYNPDALM (146 aa). The tract at residues 392-421 is disordered; that stretch reads DLPKPLRLTRPRTGNGPRRTGTPRNRRRSG. Positions 402–414 are enriched in low complexity; the sequence is PRTGNGPRRTGTP.

The protein belongs to the DEAD box helicase family. RhlB subfamily. Component of the RNA degradosome, which is a multiprotein complex involved in RNA processing and mRNA degradation.

The protein resides in the cytoplasm. It carries out the reaction ATP + H2O = ADP + phosphate + H(+). Its function is as follows. DEAD-box RNA helicase involved in RNA degradation. Has RNA-dependent ATPase activity and unwinds double-stranded RNA. The protein is ATP-dependent RNA helicase RhlB of Escherichia coli O17:K52:H18 (strain UMN026 / ExPEC).